We begin with the raw amino-acid sequence, 320 residues long: tRNA(Ile)-lysidine synthase, chloroplastic (320 aa).

31 to 36 (SGGKDS) contacts ATP.

It belongs to the tRNA(Ile)-lysidine synthase family.

The protein resides in the plastid. The protein localises to the chloroplast. The enzyme catalyses cytidine(34) in tRNA(Ile2) + L-lysine + ATP = lysidine(34) in tRNA(Ile2) + AMP + diphosphate + H(+). In terms of biological role, ligates lysine onto the cytidine present at position 34 of the AUA codon-specific tRNA(Ile) that contains the anticodon CAU, in an ATP-dependent manner. Cytidine is converted to lysidine, thus changing the amino acid specificity of the tRNA from methionine to isoleucine. The sequence is that of tRNA(Ile)-lysidine synthase, chloroplastic from Gracilaria tenuistipitata var. liui (Red alga).